The following is a 424-amino-acid chain: UDP-N-acetylglucosamine 1-carboxyvinyltransferase (424 aa).

A phosphoenolpyruvate-binding site is contributed by 22-23 (KN). UDP-N-acetyl-alpha-D-glucosamine is bound at residue Arg-93. Cys-117 serves as the catalytic Proton donor. 2-(S-cysteinyl)pyruvic acid O-phosphothioketal is present on Cys-117. UDP-N-acetyl-alpha-D-glucosamine is bound by residues 122 to 126 (RPVDL), 162 to 165 (KVSV), Asp-307, and Ile-329.

The protein belongs to the EPSP synthase family. MurA subfamily.

The protein localises to the cytoplasm. The enzyme catalyses phosphoenolpyruvate + UDP-N-acetyl-alpha-D-glucosamine = UDP-N-acetyl-3-O-(1-carboxyvinyl)-alpha-D-glucosamine + phosphate. The protein operates within cell wall biogenesis; peptidoglycan biosynthesis. Cell wall formation. Adds enolpyruvyl to UDP-N-acetylglucosamine. The polypeptide is UDP-N-acetylglucosamine 1-carboxyvinyltransferase (Haemophilus influenzae (strain PittGG)).